The following is an 815-amino-acid chain: Subtilisin-like protease SBT2.5 (815 aa).

An N-terminal signal peptide occupies residues 1-19; it reads MDIGLRIFVVFVLLVAVTA. In terms of domain architecture, Inhibitor I9 spans 21–124; sequence VYIVTMEGDP…RSVDKDWKVR (104 aa). The region spanning 120–671 is the Peptidase S8 domain; that stretch reads DWKVRRLTTH…SGHVNPSAAL (552 aa). Active-site charge relay system residues include Asp160 and His234. Positions 397 to 501 constitute a PA domain; it reads TLVSANDVLL…VSKSMDLIDY (105 aa). Residues Asn503 and Asn577 are each glycosylated (N-linked (GlcNAc...) asparagine). Residue Ser596 is the Charge relay system of the active site. A glycan (N-linked (GlcNAc...) asparagine) is linked at Asn701.

This sequence belongs to the peptidase S8 family. Expressed in roots, leaves and flowers of mature plants.

In Arabidopsis thaliana (Mouse-ear cress), this protein is Subtilisin-like protease SBT2.5.